Consider the following 418-residue polypeptide: Nuclear receptor coactivator 6 (418 aa).

Disordered regions lie at residues 1-21 and 77-98; these read EQIM…QNQS and PPGP…ANND. The interval 1-215 is TBP/GTF2A-binding region; it reads EQIMTNQMQG…PPRKKKNCHQ (215 aa). The CREBBP-binding region stretch occupies residues 1 to 352; it reads EQIMTNQMQG…LPVSQNVHPP (352 aa). Residues 1–418 form an NCOA1-binding region region; sequence EQIMTNQMQG…YQESPQNSSS (418 aa). The interval 60–214 is NCOA6IP-binding region; sequence VSNSPSQVMG…KPPRKKKNCH (155 aa). The segment covering 84–98 has biased composition (polar residues); it reads MAQQHTDPATTANND. A Phosphoserine modification is found at Ser-171. The LXXLL motif signature appears at 174–178; it reads LVNLL. Residues 186 to 418 are disordered; the sequence is HFGVNNKQNN…YQESPQNSSS (233 aa). A compositionally biased stretch (low complexity) spans 190–199; that stretch reads NNKQNNTNAN. Positions 200–212 are enriched in basic residues; sequence KQKKKKPPRKKKN. A compositionally biased stretch (low complexity) spans 269–279; that stretch reads PLQQMPPQLMQ. Over residues 282–310 the composition is skewed to pro residues; the sequence is APPPQPPQQQPQPQLPQQQPQPQPPPPSQ. A compositionally biased stretch (low complexity) spans 311-336; that stretch reads PQSQQQQQQQQQQQQQQMMMMLMMQQ. 2 positions are modified to asymmetric dimethylarginine: Arg-342 and Arg-353. Polar residues predominate over residues 358–370; it reads PDSQRVPMQQSGN. An Asymmetric dimethylarginine modification is found at Arg-391. The span at 399 to 418 shows a compositional bias: polar residues; that stretch reads PLGSNSRKMVYQESPQNSSS.

In terms of assembly, monomer and homodimer. Interacts in vitro with the basal transcription factors GTF2A and TBP, suggesting an autonomous transactivation function. Interacts with NCOA1, CRSP3, RBM14, the histone acetyltransferase proteins EP300 and CREBBP, and with methyltransferase proteins NCOA6IP and PRMT2. Component of the MLL2/3 complex (also named ASCOM complex), at least composed of KMT2D/MLL2 or KMT2C/MLL3, ASH2L, RBBP5, WDR5, NCOA6, DPY30, KDM6A, PAXIP1/PTIP, PAGR1 and alpha- and beta-tubulin. Interacts with ZNF335; may enhance ligand-dependent transcriptional activation by nuclear hormone receptors. In terms of processing, phosphorylated.

It is found in the nucleus. Functionally, nuclear receptor coactivator that directly binds nuclear receptors and stimulates the transcriptional activities in a hormone-dependent fashion. Coactivate expression in an agonist- and AF2-dependent manner. May coactivate expression via a remodeling of chromatin and its interaction with histone acetyltransferase proteins. Involved in the coactivation of different nuclear receptors, such as for steroids (GR and ERs), retinoids (RARs and RXRs), thyroid hormone (TRs), vitamin D3 (VDR) and prostanoids (PPARs). Probably functions as a general coactivator, rather than just a nuclear receptor coactivator. May also be involved in the coactivation of the NF-kappa-B pathway. This is Nuclear receptor coactivator 6 (Ncoa6) from Rattus norvegicus (Rat).